We begin with the raw amino-acid sequence, 417 residues long: Phosphoglycerate kinase (417 aa).

(2R)-3-phosphoglycerate-binding residues include Val23, Asp24, Phe25, Asn26, Gln38, Arg39, Ser62, His63, Gly65, Arg66, Leu121, Arg122, His169, and Arg170. Gly213 provides a ligand contact to ADP. Gly213 is a binding site for CDP. AMP contacts are provided by Ala214 and Lys215. ATP is bound at residue Ala214. Mg(2+) is bound at residue Ala214. A CDP-binding site is contributed by Asp218. Asp218 provides a ligand contact to Mg(2+). Lys219 contributes to the AMP binding site. Lys219 serves as a coordination point for ATP. Residue Gly237 participates in ADP binding. Residue Gly237 coordinates CDP. Residues Gly238 and Gly312 each contribute to the AMP site. The ATP site is built by Gly238 and Gly312. The CDP site is built by Gly337 and Phe342. ADP is bound at residue Phe342. Glu343 provides a ligand contact to AMP. ATP is bound by residues Glu343, Asp374, and Thr375. Asp374 contacts Mg(2+).

It belongs to the phosphoglycerate kinase family. Monomer. It depends on Mg(2+) as a cofactor.

It localises to the cytoplasm. It is found in the mitochondrion. It carries out the reaction (2R)-3-phosphoglycerate + ATP = (2R)-3-phospho-glyceroyl phosphate + ADP. It functions in the pathway carbohydrate degradation; glycolysis; pyruvate from D-glyceraldehyde 3-phosphate: step 2/5. Functionally, catalyzes one of the two ATP producing reactions in the glycolytic pathway via the reversible conversion of 1,3-diphosphoglycerate to 3-phosphoglycerate. Both L- and D- forms of purine and pyrimidine nucleotides can be used as substrates, but the activity is much lower on pyrimidines. Negatively regulates the biosynthesis of acetyl-CoA from pyruvate in the mitochondrion. In Yarrowia lipolytica (strain CLIB 122 / E 150) (Yeast), this protein is Phosphoglycerate kinase (PGK1).